The sequence spans 92 residues: Kinetoplastid membrane protein 11 (92 aa).

It belongs to the KMP-11 family. As to quaternary structure, monomer.

It is found in the cytoplasm. The protein localises to the cytoskeleton. Functionally, may be involved in the regulation of the cytoskeleton through interaction with the subpellicular microtubules. May be involved in parasite mobility and attachment to the surface of the host cell. Behaves as a strong immunogen during infection. The protein is Kinetoplastid membrane protein 11 (KMP-11/1) of Trypanosoma brucei brucei.